The chain runs to 149 residues: Ribosomal RNA large subunit methyltransferase H (149 aa).

Residues L71, G98, and 117–122 (LSKLTL) each bind S-adenosyl-L-methionine.

Belongs to the RNA methyltransferase RlmH family. Homodimer.

It is found in the cytoplasm. It catalyses the reaction pseudouridine(1915) in 23S rRNA + S-adenosyl-L-methionine = N(3)-methylpseudouridine(1915) in 23S rRNA + S-adenosyl-L-homocysteine + H(+). Functionally, specifically methylates the pseudouridine at position 1915 (m3Psi1915) in 23S rRNA. The chain is Ribosomal RNA large subunit methyltransferase H from Campylobacter jejuni subsp. doylei (strain ATCC BAA-1458 / RM4099 / 269.97).